Consider the following 74-residue polypeptide: Ferredoxin MycCII (74 aa).

Residues 1–29 enclose the 4Fe-4S ferredoxin-type domain; that stretch reads MRIVLDAERCVGAGQCEATAPELFTQGDD. [3Fe-4S] cluster-binding residues include cysteine 10, cysteine 16, and cysteine 54.

Requires [3Fe-4S] cluster as cofactor.

The protein operates within antibiotic biosynthesis; mycinamicin biosynthesis. In terms of biological role, specific electron transport protein capable of effectively supporting cytochrome P450 MycCI activity in the biosynthesis of mycinamicin, a 16-membered macrolide antibiotic. The chain is Ferredoxin MycCII from Micromonospora griseorubida.